The following is a 292-amino-acid chain: Elongation factor Ts (292 aa).

Positions 79–82 (TDFV) are involved in Mg(2+) ion dislocation from EF-Tu.

Belongs to the EF-Ts family.

It is found in the cytoplasm. Functionally, associates with the EF-Tu.GDP complex and induces the exchange of GDP to GTP. It remains bound to the aminoacyl-tRNA.EF-Tu.GTP complex up to the GTP hydrolysis stage on the ribosome. The chain is Elongation factor Ts from Metamycoplasma arthritidis (strain 158L3-1) (Mycoplasma arthritidis).